A 258-amino-acid polypeptide reads, in one-letter code: Cytochrome c oxidase subunit 2 (258 aa).

Topologically, residues 1–41 are mitochondrial intermembrane; sequence MIVNECLFFTIALCDAAEPWQLGFQDAATPMMQGIIDLHHD. A helical transmembrane segment spans residues 42–58; it reads ILFFLILILVFVLWILV. Residues 59 to 82 lie on the Mitochondrial matrix side of the membrane; it reads RALWHFYYKKNPIPQRIVHGTTIE. Residues 83–104 traverse the membrane as a helical segment; that stretch reads ILWTIFPSIILMFIAIPSFALL. Residues 105-258 lie on the Mitochondrial intermembrane side of the membrane; the sequence is YSMDEVVVDP…VSNLFIPPTS (154 aa). His-187, Cys-222, Glu-224, Cys-226, His-230, and Met-233 together coordinate Cu cation. A Mg(2+)-binding site is contributed by Glu-224.

It belongs to the cytochrome c oxidase subunit 2 family. In terms of assembly, component of the cytochrome c oxidase (complex IV, CIV), a multisubunit enzyme composed of a catalytic core of 3 subunits and several supernumerary subunits. The complex exists as a monomer or a dimer and forms supercomplexes (SCs) in the inner mitochondrial membrane with ubiquinol-cytochrome c oxidoreductase (cytochrome b-c1 complex, complex III, CIII). It depends on Cu cation as a cofactor.

The protein resides in the mitochondrion inner membrane. The catalysed reaction is 4 Fe(II)-[cytochrome c] + O2 + 8 H(+)(in) = 4 Fe(III)-[cytochrome c] + 2 H2O + 4 H(+)(out). Component of the cytochrome c oxidase, the last enzyme in the mitochondrial electron transport chain which drives oxidative phosphorylation. The respiratory chain contains 3 multisubunit complexes succinate dehydrogenase (complex II, CII), ubiquinol-cytochrome c oxidoreductase (cytochrome b-c1 complex, complex III, CIII) and cytochrome c oxidase (complex IV, CIV), that cooperate to transfer electrons derived from NADH and succinate to molecular oxygen, creating an electrochemical gradient over the inner membrane that drives transmembrane transport and the ATP synthase. Cytochrome c oxidase is the component of the respiratory chain that catalyzes the reduction of oxygen to water. Electrons originating from reduced cytochrome c in the intermembrane space (IMS) are transferred via the dinuclear copper A center (CU(A)) of subunit 2 and heme A of subunit 1 to the active site in subunit 1, a binuclear center (BNC) formed by heme A3 and copper B (CU(B)). The BNC reduces molecular oxygen to 2 water molecules using 4 electrons from cytochrome c in the IMS and 4 protons from the mitochondrial matrix. This is Cytochrome c oxidase subunit 2 (COX2) from Oenothera berteroana (Bertero's evening primrose).